Here is a 145-residue protein sequence, read N- to C-terminus: uncharacterized protein (145 aa).

The signal sequence occupies residues 1 to 29; sequence MHLIRAAGAVCLAVVLIAGCRFNEDQHQA. The stretch at 67-101 forms a coiled coil; the sequence is KNGTQEKAEIQDKLSGVNQEGEEALDEMKMILSEL.

This is an uncharacterized protein from Bacillus subtilis (strain 168).